The primary structure comprises 475 residues: Ribulose bisphosphate carboxylase large chain (475 aa).

The propeptide occupies 1–2; sequence MS. At Pro-3 the chain carries N-acetylproline. Lys-14 is subject to N6,N6,N6-trimethyllysine. Substrate-binding residues include Asn-123 and Thr-173. The Proton acceptor role is filled by Lys-175. Lys-177 is a binding site for substrate. Lys-201, Asp-203, and Glu-204 together coordinate Mg(2+). N6-carboxylysine is present on Lys-201. The Proton acceptor role is filled by His-294. Residues Arg-295, His-327, and Ser-379 each contribute to the substrate site.

This sequence belongs to the RuBisCO large chain family. Type I subfamily. Heterohexadecamer of 8 large chains and 8 small chains; disulfide-linked. The disulfide link is formed within the large subunit homodimers. Mg(2+) is required as a cofactor. Post-translationally, the disulfide bond which can form in the large chain dimeric partners within the hexadecamer appears to be associated with oxidative stress and protein turnover.

It is found in the plastid. The protein localises to the chloroplast. It catalyses the reaction 2 (2R)-3-phosphoglycerate + 2 H(+) = D-ribulose 1,5-bisphosphate + CO2 + H2O. The enzyme catalyses D-ribulose 1,5-bisphosphate + O2 = 2-phosphoglycolate + (2R)-3-phosphoglycerate + 2 H(+). RuBisCO catalyzes two reactions: the carboxylation of D-ribulose 1,5-bisphosphate, the primary event in carbon dioxide fixation, as well as the oxidative fragmentation of the pentose substrate in the photorespiration process. Both reactions occur simultaneously and in competition at the same active site. This Angiopteris lygodiifolia (Turnip fern) protein is Ribulose bisphosphate carboxylase large chain.